Here is a 124-residue protein sequence, read N- to C-terminus: Large ribosomal subunit protein bL12 (124 aa).

The protein belongs to the bacterial ribosomal protein bL12 family. In terms of assembly, homodimer. Part of the ribosomal stalk of the 50S ribosomal subunit. Forms a multimeric L10(L12)X complex, where L10 forms an elongated spine to which 2 to 4 L12 dimers bind in a sequential fashion. Binds GTP-bound translation factors.

Functionally, forms part of the ribosomal stalk which helps the ribosome interact with GTP-bound translation factors. Is thus essential for accurate translation. In Borreliella burgdorferi (strain ATCC 35210 / DSM 4680 / CIP 102532 / B31) (Borrelia burgdorferi), this protein is Large ribosomal subunit protein bL12.